Reading from the N-terminus, the 468-residue chain is Sulfate adenylyltransferase subunit 1 (468 aa).

The 218-residue stretch at 22-239 folds into the tr-type G domain; it reads KELLRFLTCG…TVEIASDKNA (218 aa). Residues 31 to 38 are G1; the sequence is GSVDDGKS. A GTP-binding site is contributed by 31–38; the sequence is GSVDDGKS. The interval 89–93 is G2; the sequence is GITID. Residues 110–113 are G3; the sequence is DTPG. Residues 110 to 114 and 165 to 168 each bind GTP; these read DTPGH and NKMD. The interval 165-168 is G4; it reads NKMD. The G5 stretch occupies residues 202-204; that stretch reads SAL.

The protein belongs to the TRAFAC class translation factor GTPase superfamily. Classic translation factor GTPase family. CysN/NodQ subfamily. Heterodimer composed of CysD, the smaller subunit, and CysN.

It catalyses the reaction sulfate + ATP + H(+) = adenosine 5'-phosphosulfate + diphosphate. It functions in the pathway sulfur metabolism; hydrogen sulfide biosynthesis; sulfite from sulfate: step 1/3. With CysD forms the ATP sulfurylase (ATPS) that catalyzes the adenylation of sulfate producing adenosine 5'-phosphosulfate (APS) and diphosphate, the first enzymatic step in sulfur assimilation pathway. APS synthesis involves the formation of a high-energy phosphoric-sulfuric acid anhydride bond driven by GTP hydrolysis by CysN coupled to ATP hydrolysis by CysD. The protein is Sulfate adenylyltransferase subunit 1 of Teredinibacter turnerae (strain ATCC 39867 / T7901).